Reading from the N-terminus, the 317-residue chain is Protease HtpX homolog (317 aa).

A run of 2 helical transmembrane segments spans residues 14–34 and 41–61; these read LMGI…LYYI and IALL…QWLF. His-146 contributes to the Zn(2+) binding site. Glu-147 is an active-site residue. His-150 lines the Zn(2+) pocket. 2 consecutive transmembrane segments (helical) span residues 158–178 and 189–209; these read MLLA…TLLF and IVLL…LILA. Glu-215 contributes to the Zn(2+) binding site.

It belongs to the peptidase M48B family. Requires Zn(2+) as cofactor.

It is found in the cell membrane. The sequence is that of Protease HtpX homolog from Thermoplasma acidophilum (strain ATCC 25905 / DSM 1728 / JCM 9062 / NBRC 15155 / AMRC-C165).